A 151-amino-acid chain; its full sequence is MSKRTEQLTELLAPVVEDLGFVLWGVEYIQGRGAVLRVFIDHADGISVDDCAAVSHEVSGVLDVEDPIPGEFNLEVSSPGMDRPMFDITQYVDYIGEDVQLKLLAPVSGKRKMTAAIVAVDGDTLVVELDGETLRVPYSQVDRARLQPRFN.

The protein belongs to the RimP family.

The protein resides in the cytoplasm. Functionally, required for maturation of 30S ribosomal subunits. The polypeptide is Ribosome maturation factor RimP (Alcanivorax borkumensis (strain ATCC 700651 / DSM 11573 / NCIMB 13689 / SK2)).